We begin with the raw amino-acid sequence, 22 residues long: Odorant-binding protein 1 (22 aa).

This sequence belongs to the calycin superfamily. Lipocalin family. Homodimer. In terms of processing, the N-terminus is blocked.

Its function is as follows. Binds the chemical odorant, 2-isobutyl-3-methoxypyrazine. This is Odorant-binding protein 1 from Oryctolagus cuniculus (Rabbit).